The sequence spans 72 residues: Translation initiation factor IF-1 (72 aa).

The S1-like domain maps to 1–72; that stretch reads MAKEDVIEIE…TRGRITYRFK (72 aa).

This sequence belongs to the IF-1 family. Component of the 30S ribosomal translation pre-initiation complex which assembles on the 30S ribosome in the order IF-2 and IF-3, IF-1 and N-formylmethionyl-tRNA(fMet); mRNA recruitment can occur at any time during PIC assembly.

It is found in the cytoplasm. In terms of biological role, one of the essential components for the initiation of protein synthesis. Stabilizes the binding of IF-2 and IF-3 on the 30S subunit to which N-formylmethionyl-tRNA(fMet) subsequently binds. Helps modulate mRNA selection, yielding the 30S pre-initiation complex (PIC). Upon addition of the 50S ribosomal subunit IF-1, IF-2 and IF-3 are released leaving the mature 70S translation initiation complex. The sequence is that of Translation initiation factor IF-1 from Streptococcus agalactiae serotype Ia (strain ATCC 27591 / A909 / CDC SS700).